Consider the following 253-residue polypeptide: Phosphoadenosine 5'-phosphosulfate reductase (253 aa).

The active-site Nucleophile; cysteine thiosulfonate intermediate is the Cys-239.

Belongs to the PAPS reductase family. CysH subfamily.

Its subcellular location is the cytoplasm. The enzyme catalyses [thioredoxin]-disulfide + sulfite + adenosine 3',5'-bisphosphate + 2 H(+) = [thioredoxin]-dithiol + 3'-phosphoadenylyl sulfate. Its pathway is sulfur metabolism; hydrogen sulfide biosynthesis; sulfite from sulfate: step 3/3. In terms of biological role, catalyzes the formation of sulfite from phosphoadenosine 5'-phosphosulfate (PAPS) using thioredoxin as an electron donor. The chain is Phosphoadenosine 5'-phosphosulfate reductase from Photobacterium profundum (strain SS9).